The chain runs to 339 residues: Protein FAM50A (339 aa).

Positions 1 to 31 (MAQYKGAASEAGRAMHLMKKREKQREQMEQM) are disordered. A2 carries the N-acetylalanine modification. K100 is covalently cross-linked (Glycyl lysine isopeptide (Lys-Gly) (interchain with G-Cter in SUMO2)). Residues 150-177 (TTKKKKLGKNPDVDTSFLPDRDREEEEN) form a disordered region. Positions 152-155 (KKKK) match the Nuclear localization signal motif. The span at 168 to 177 (PDRDREEEEN) shows a compositional bias: basic and acidic residues.

This sequence belongs to the FAM50 family. Interacts with EFTUD2, a component of the spliceosome U5 complex. Interacts with DDX41, a component of the spliceosome C complex. In terms of tissue distribution, widely expressed in embryonic and adult tissues.

Its subcellular location is the nucleus. Functionally, probably involved in the regulation of pre-mRNA splicing. This chain is Protein FAM50A (Fam50a), found in Mus musculus (Mouse).